The following is a 135-amino-acid chain: Beta/delta-urticatoxin-Ui2a (135 aa).

An N-terminal signal peptide occupies residues 1–18 (MGAIVLVAIMALVASSSA). Positions 19–72 (FSDDEQNMMNAEGEKGIRSYSAADDVSDMIESLFVNSGNRNLVLMMLSGRPQPN) are excised as a propeptide. 6 disulfides stabilise this stretch: C75-C92, C82-C97, C91-C105, C107-C121, C114-C126, and C120-C134.

It belongs to the urticatoxin-2 family. In terms of tissue distribution, expressed in trichomes, that are stiff epidermal hairs located on the surface of petioles and leaves.

The protein resides in the secreted. In terms of biological role, plant defense neurotoxin that causes pain and systemic symptoms in mammals via modulation of voltage-gated sodium channels (Nav). Potent modulator of human Nav1.5/SCN5A (EC(50)=55 nM), Nav1.6/SCN8A (EC(50)=0.86 nM), and Nav1.7/SCN9A (EC(50)=208 nM), where it shifts the activation threshold to more negative potentials and delays fast inactivation. Also shifts the voltage-dependence of steady-state fast inactivation of Nav1.6/SCN8A, but not that of Nav1.5/SCN5A or Nav1.7/SCN9A. On Nav1.7/SCN9A, principally acts by binding to extracellular loops of domain IV (Nav site 3). In vivo, intraplantar injection into mice causes numerous dose-dependent, immediate, and long-lasting spontaneous pain behaviors, while no swelling is observed in the injected paw. At the highest doses tested, systemic symptoms including hypokinesia and hypersalivation are observed. This is Beta/delta-urticatoxin-Ui2a from Urtica incisa (Scrub nettle).